Here is a 194-residue protein sequence, read N- to C-terminus: Xanthine phosphoribosyltransferase (194 aa).

The xanthine site is built by Leu20 and Asn27. 128 to 132 (ANGCA) contributes to the 5-phospho-alpha-D-ribose 1-diphosphate binding site. Xanthine is bound at residue Lys156.

This sequence belongs to the purine/pyrimidine phosphoribosyltransferase family. Xpt subfamily. As to quaternary structure, homodimer.

The protein resides in the cytoplasm. It catalyses the reaction XMP + diphosphate = xanthine + 5-phospho-alpha-D-ribose 1-diphosphate. Its pathway is purine metabolism; XMP biosynthesis via salvage pathway; XMP from xanthine: step 1/1. Functionally, converts the preformed base xanthine, a product of nucleic acid breakdown, to xanthosine 5'-monophosphate (XMP), so it can be reused for RNA or DNA synthesis. In Lachnoclostridium phytofermentans (strain ATCC 700394 / DSM 18823 / ISDg) (Clostridium phytofermentans), this protein is Xanthine phosphoribosyltransferase.